Here is a 2537-residue protein sequence, read N- to C-terminus: Histone-lysine N-methyltransferase SETD2 (2537 aa).

The segment covering 1–12 has biased composition (pro residues); that stretch reads MKPLPSQQPPPK. Disordered regions lie at residues 1–31, 91–142, 156–483, 510–554, and 607–629; these read MKPLPSQQPPPKMGDFYDPEHPTPEEEENEA, TALS…ELGR, PQLA…RDLR, YTSK…STSR, and SEREKTGSPTPSNQLNDSPTFKK. Positions 18–31 are enriched in basic and acidic residues; that stretch reads DPEHPTPEEEENEA. Residues 91–103 show a composition bias toward polar residues; it reads TALSNEKQSDSPN. At Ser-132 the chain carries Phosphoserine. Over residues 156 to 166 the composition is skewed to low complexity; it reads PQLAASTTAAS. Residues 187–205 are compositionally biased toward pro residues; that stretch reads PSSPPPPPPPPQASSPSPP. At Ser-242 the chain carries Phosphoserine. A compositionally biased stretch (basic and acidic residues) spans 264 to 291; the sequence is LEEHTVQTLKEQADHLLQKEDSHIGKEE. A phosphoserine mark is found at Ser-322, Ser-324, and Ser-345. Basic and acidic residues-rich tracts occupy residues 336–401, 422–433, 440–468, and 510–528; these read RSHD…ERDR, RSERSHYYDSER, PYRERTRYSRPYTDNRARESSDSEDEYKK, and YTSKLERESKRTSEHETIK. A Glycyl lysine isopeptide (Lys-Gly) (interchain with G-Cter in SUMO2) cross-link involves residue Lys-360. Residue Ser-423 is modified to Phosphoserine. A phosphoserine mark is found at Ser-532, Ser-614, and Ser-624. The segment covering 613-625 has biased composition (polar residues); that stretch reads GSPTPSNQLNDSP. The residue at position 626 (Thr-626) is a Phosphothreonine. Ser-633 carries the phosphoserine modification. A Glycyl lysine isopeptide (Lys-Gly) (interchain with G-Cter in SUMO2) cross-link involves residue Lys-637. 4 positions are modified to phosphoserine: Ser-697, Ser-707, Ser-743, and Ser-753. The segment at 729–749 is disordered; sequence RDSDDTCRQHNTSKSPFREME. Lys-775 participates in a covalent cross-link: Glycyl lysine isopeptide (Lys-Gly) (interchain with G-Cter in SUMO2). Disordered regions lie at residues 829–894, 941–974, 1015–1078, and 1135–1185; these read CDNR…PTLD, QEAQEEGNSILHERRGRPEIPLDEEQRGHTHISD, EDYS…HYSD, and AHAQ…EDLP. The segment covering 830-847 has biased composition (basic and acidic residues); the sequence is DNREPTDRHSENTCDEYK. Polar residues predominate over residues 849–858; the sequence is SIGSTSSASH. Residues 867-883 are compositionally biased toward low complexity; the sequence is PIGSSGISSLQSPPSGI. Over residues 951–974 the composition is skewed to basic and acidic residues; it reads LHERRGRPEIPLDEEQRGHTHISD. Positions 1026–1037 are enriched in acidic residues; it reads DESDSEDTESDD. Residue Ser-1077 is modified to Phosphoserine. Residues 1150 to 1165 show a composition bias toward basic and acidic residues; that stretch reads SRSDHLGHLNPEDTLR. Position 1201 is a phosphoserine (Ser-1201). Disordered stretches follow at residues 1232 to 1254, 1280 to 1346, and 1366 to 1396; these read GWDFSQQERPTTTYQQPDSSYGT, WDPR…APEI, and NFEKNDIKERGPPKKRRQELESDSESDGELQ. 2 stretches are compositionally biased toward polar residues: residues 1235–1254 and 1319–1329; these read FSQQERPTTTYQQPDSSYGT and RSGSHFSSPSN. The segment covering 1366–1377 has biased composition (basic and acidic residues); that stretch reads NFEKNDIKERGP. 3 positions are modified to phosphoserine: Ser-1387, Ser-1389, and Ser-1391. Residues 1392–1688 form an interaction with TUBA1A region; sequence DGELQARKKV…KKERSRKKDS (297 aa). One can recognise an AWS domain in the interval 1468 to 1522; the sequence is IKRMQCECTPLSKDERAQGEVACGEDCLNRLLMIECSSRCPNGDYCSNRRFQRKQ. Zn(2+) contacts are provided by Cys-1473, Cys-1475, Cys-1490, Cys-1494, Cys-1503, Cys-1507, and Cys-1513. In terms of domain architecture, SET spans 1524 to 1641; the sequence is ADVEVILTEK…SGSELTFDYQ (118 aa). S-adenosyl-L-methionine-binding positions include 1534 to 1536, 1577 to 1579, and 1602 to 1603; these read KGW, HYY, and NH. Cys-1605 serves as a coordination point for Zn(2+). A Post-SET domain is found at 1648-1664; the sequence is EAQKCFCGSANCRGYLG. Residue Gln-1650 participates in S-adenosyl-L-methionine binding. Cys-1652 contributes to the Zn(2+) binding site. Position 1653 (Phe-1653) interacts with S-adenosyl-L-methionine. Residues Cys-1654 and Cys-1659 each contribute to the Zn(2+) site. 3 positions are modified to phosphoserine: Ser-1670, Ser-1818, and Ser-1819. The disordered stretch occupies residues 1806 to 1848; it reads TAVPQLSEGDGYSSENTSRAHTPLNTPDPSAKPSTEMDTDTPK. A compositionally biased stretch (polar residues) spans 1818 to 1833; the sequence is SSENTSRAHTPLNTPD. Thr-1827 and Thr-1846 each carry phosphothreonine. Phosphoserine is present on residues Ser-1862 and Ser-1926. Disordered stretches follow at residues 1914–1981 and 1993–2110; these read SEAT…DISD and LKEV…AQKQ. Basic and acidic residues predominate over residues 1934–1946; it reads TEPKDSNGTKLEE. Positions 1947–1964 are enriched in acidic residues; the sequence is TIAEETPSQDEEEGVSDV. Residues Ser-1954, Ser-1962, and Ser-1969 each carry the phosphoserine modification. Composition is skewed to basic and acidic residues over residues 1965 to 1978, 1993 to 2020, and 2032 to 2045; these read ESERSQEPPDKTVD, LKEVYRIPKKSQTEKESTVAERGRDAAA, and RSRERDPDKQSQNK. Phosphoserine occurs at positions 2053 and 2055. Basic and acidic residues-rich tracts occupy residues 2063–2073 and 2084–2108; these read RGTKRPDDRYD and KDRNKLSTEERRKLFEQEVAQREAQ. Residues 2090–2119 are a coiled coil; sequence STEERRKLFEQEVAQREAQKQQQQMQNLGM. The tract at residues 2110–2339 is low charge region; that stretch reads QQQQMQNLGM…APGQPQSLQP (230 aa). The WW domain occupies 2362–2395; sequence IVLPPNWKTARDPEGKIYYYHVITRQTQWDPPTW. The interval 2412–2438 is disordered; sequence LGTPTYDENPMKTSKKPKTAEADTSSE. Positions 2430-2537 are interaction with POLR2A; that stretch reads TAEADTSSEL…YKPKEDTELE (108 aa).

This sequence belongs to the class V-like SAM-binding methyltransferase superfamily. Histone-lysine methyltransferase family. SET2 subfamily. In terms of assembly, specifically interacts with hyperphosphorylated C-terminal domain (CTD) of RNA polymerase II large subunit (POLR2A): binds to CTD heptad repeats doubly phosphorylated on 'Ser-2' and 'Ser-5' of each heptad. Interacts with HTT. Interacts with IWS1. Interacts with p53/TP53; leading to regulate p53/TP53 target genes. Component of a complex with HNRNPL. Interacts with TUBA1A; the interaction is independent on alpha-tubulin acetylation on 'Lys-40'. Post-translationally, may be automethylated.

It localises to the nucleus. It is found in the chromosome. It carries out the reaction L-lysyl(36)-[histone H3] + 3 S-adenosyl-L-methionine = N(6),N(6),N(6)-trimethyl-L-lysyl(36)-[histone H3] + 3 S-adenosyl-L-homocysteine + 3 H(+). It catalyses the reaction L-lysyl-[protein] + S-adenosyl-L-methionine = N(6)-methyl-L-lysyl-[protein] + S-adenosyl-L-homocysteine + H(+). The enzyme catalyses L-lysyl-[protein] + 3 S-adenosyl-L-methionine = N(6),N(6),N(6)-trimethyl-L-lysyl-[protein] + 3 S-adenosyl-L-homocysteine + 3 H(+). Its activity is regulated as follows. Specifically inhibited by sinefungin derivatives. Functionally, histone methyltransferase that specifically trimethylates 'Lys-36' of histone H3 (H3K36me3) using dimethylated 'Lys-36' (H3K36me2) as substrate. It is capable of trimethylating unmethylated H3K36 (H3K36me0) in vitro. Represents the main enzyme generating H3K36me3, a specific tag for epigenetic transcriptional activation. Plays a role in chromatin structure modulation during elongation by coordinating recruitment of the FACT complex and by interacting with hyperphosphorylated POLR2A. Acts as a key regulator of DNA mismatch repair in G1 and early S phase by generating H3K36me3, a mark required to recruit MSH6 subunit of the MutS alpha complex: early recruitment of the MutS alpha complex to chromatin to be replicated allows a quick identification of mismatch DNA to initiate the mismatch repair reaction. Required for DNA double-strand break repair in response to DNA damage: acts by mediating formation of H3K36me3, promoting recruitment of RAD51 and DNA repair via homologous recombination (HR). Acts as a tumor suppressor. H3K36me3 also plays an essential role in the maintenance of a heterochromatic state, by recruiting DNA methyltransferase DNMT3A. H3K36me3 is also enhanced in intron-containing genes, suggesting that SETD2 recruitment is enhanced by splicing and that splicing is coupled to recruitment of elongating RNA polymerase. Required during angiogenesis. Required for endoderm development by promoting embryonic stem cell differentiation toward endoderm: acts by mediating formation of H3K36me3 in distal promoter regions of FGFR3, leading to regulate transcription initiation of FGFR3. In addition to histones, also mediates methylation of other proteins, such as tubulins and STAT1. Trimethylates 'Lys-40' of alpha-tubulins such as TUBA1B (alpha-TubK40me3); alpha-TubK40me3 is required for normal mitosis and cytokinesis and may be a specific tag in cytoskeletal remodeling. Involved in interferon-alpha-induced antiviral defense by mediating both monomethylation of STAT1 at 'Lys-525' and catalyzing H3K36me3 on promoters of some interferon-stimulated genes (ISGs) to activate gene transcription. This chain is Histone-lysine N-methyltransferase SETD2, found in Mus musculus (Mouse).